The chain runs to 174 residues: RNA pyrophosphohydrolase (174 aa).

In terms of domain architecture, Nudix hydrolase spans Pro14–Ala167. The short motif at Gly55–Gly76 is the Nudix box element.

This sequence belongs to the Nudix hydrolase family. RppH subfamily. Requires a divalent metal cation as cofactor.

In terms of biological role, accelerates the degradation of transcripts by removing pyrophosphate from the 5'-end of triphosphorylated RNA, leading to a more labile monophosphorylated state that can stimulate subsequent ribonuclease cleavage. This Brucella anthropi (strain ATCC 49188 / DSM 6882 / CCUG 24695 / JCM 21032 / LMG 3331 / NBRC 15819 / NCTC 12168 / Alc 37) (Ochrobactrum anthropi) protein is RNA pyrophosphohydrolase.